Consider the following 165-residue polypeptide: Phosphopantetheine adenylyltransferase (165 aa).

Ser9 provides a ligand contact to substrate. Residues 9–10 and His17 contribute to the ATP site; that span reads SF. 3 residues coordinate substrate: Lys41, Leu73, and Lys87. ATP contacts are provided by residues 88–90, Glu98, and 122–128; these read GLR and YSFLSSS.

Belongs to the bacterial CoaD family. In terms of assembly, homohexamer. The cofactor is Mg(2+).

Its subcellular location is the cytoplasm. It carries out the reaction (R)-4'-phosphopantetheine + ATP + H(+) = 3'-dephospho-CoA + diphosphate. It participates in cofactor biosynthesis; coenzyme A biosynthesis; CoA from (R)-pantothenate: step 4/5. Its function is as follows. Reversibly transfers an adenylyl group from ATP to 4'-phosphopantetheine, yielding dephospho-CoA (dPCoA) and pyrophosphate. This Acidothermus cellulolyticus (strain ATCC 43068 / DSM 8971 / 11B) protein is Phosphopantetheine adenylyltransferase.